The primary structure comprises 93 residues: MARVTVQDAVEKIGNRFDLILTAARRARQLQLHTREPLVAEEGDKPTVIALREIEEGLINNQIMDQQEKFDAIVQEVAEKEAISFLADVQANS.

This sequence belongs to the RNA polymerase subunit omega family. In terms of assembly, the RNAP catalytic core consists of 2 alpha, 1 beta, 1 beta' and 1 omega subunit. When a sigma factor is associated with the core the holoenzyme is formed, which can initiate transcription.

It carries out the reaction RNA(n) + a ribonucleoside 5'-triphosphate = RNA(n+1) + diphosphate. Its function is as follows. Promotes RNA polymerase assembly. Latches the N- and C-terminal regions of the beta' subunit thereby facilitating its interaction with the beta and alpha subunits. This Glaesserella parasuis serovar 5 (strain SH0165) (Haemophilus parasuis) protein is DNA-directed RNA polymerase subunit omega.